Here is a 276-residue protein sequence, read N- to C-terminus: Phospholipid phosphatase 2 (276 aa).

Residues 1–4 (MERR) lie on the Cytoplasmic side of the membrane. Residues 5–25 (WVFVLLDVLCVLVASLPFIIL) traverse the membrane as a helical segment. Residues 26-51 (TLVNAPYKRGFYCGDDSIRYPYRPDT) lie on the Lumenal side of the membrane. Residues 52-72 (ITHGLMAGVIITATVVLVSSG) traverse the membrane as a helical segment. The Cytoplasmic segment spans residues 73–87 (EAYLVYTDRLYSRSD). A helical transmembrane segment spans residues 88–108 (FNNYVAAIYKVLGTFLFGAAV). The Lumenal portion of the chain corresponds to 109–161 (SQSLTDLAKYMIGRLRPSFLAVCDPDWSRVNCSGYVQVEVCRGSPANVTEARL). A phosphatase sequence motif I region spans residues 117–125 (KYMIGRLRP). N-linked (GlcNAc...) asparagine glycosylation is found at N139 and N155. A helical membrane pass occupies residues 162–182 (SFYSGHSSFGMYCMLFLALYV). A phosphatase sequence motif II region spans residues 164–167 (YSGH). H167 functions as the Proton donors in the catalytic mechanism. The Cytoplasmic portion of the chain corresponds to 183 to 189 (QARLCWK). A helical transmembrane segment spans residues 190 to 210 (WARLLRPTVQFFLVAFAIYVG). Residues 211–225 (YTRVSDNKHHWSDVL) lie on the Lumenal side of the membrane. The interval 212–223 (TRVSDNKHHWSD) is phosphatase sequence motif III. H219 acts as the Nucleophile in catalysis. A helical transmembrane segment spans residues 226–246 (VGLLQGALVACLTVCYVSDFF). The Cytoplasmic portion of the chain corresponds to 247–276 (KSRPPQSCQENEESERKPSLSLTLTLGDRP). The segment at 252-276 (QSCQENEESERKPSLSLTLTLGDRP) is disordered.

The protein belongs to the PA-phosphatase related phosphoesterase family. In terms of assembly, forms functional homodimers and homooligomers. Can also form heterooligomers with PLPP1 and PLPP3. In terms of processing, N-glycosylated. As to expression, expressed in the brain.

It is found in the membrane. The protein localises to the cell membrane. Its subcellular location is the early endosome membrane. The protein resides in the endoplasmic reticulum membrane. It catalyses the reaction a 1,2-diacyl-sn-glycero-3-phosphate + H2O = a 1,2-diacyl-sn-glycerol + phosphate. The catalysed reaction is 1,2-dihexadecanoyl-sn-glycero-3-phosphate + H2O = 1,2-dihexadecanoyl-sn-glycerol + phosphate. The enzyme catalyses 1,2-di-(9Z-octadecenoyl)-sn-glycero-3-phosphate + H2O = 1,2-di-(9Z-octadecenoyl)-sn-glycerol + phosphate. It carries out the reaction a monoacyl-sn-glycero-3-phosphate + H2O = a monoacylglycerol + phosphate. It catalyses the reaction (9Z)-octadecenoyl-sn-glycero-3-phosphate + H2O = (9Z-octadecenoyl)-glycerol + phosphate. The catalysed reaction is sphing-4-enine 1-phosphate + H2O = sphing-4-enine + phosphate. The enzyme catalyses an N-acylsphing-4-enine 1-phosphate + H2O = an N-acylsphing-4-enine + phosphate. It carries out the reaction N-(octanoyl)-sphing-4-enine-1-phosphate + H2O = N-octanoylsphing-4-enine + phosphate. It catalyses the reaction N-(9Z-octadecenoyl)-ethanolamine phosphate + H2O = N-(9Z-octadecenoyl) ethanolamine + phosphate. It functions in the pathway lipid metabolism; phospholipid metabolism. With respect to regulation, magnesium-independent phospholipid phosphatase. Insensitive to N-ethylmaleimide. Magnesium-independent phospholipid phosphatase that catalyzes the dephosphorylation of a variety of glycerolipid and sphingolipid phosphate esters including phosphatidate/PA, lysophosphatidate/LPA, sphingosine 1-phosphate/S1P and ceramide 1-phosphate/C1P. Has no apparent extracellular phosphatase activity and therefore most probably acts intracellularly. Also acts on N-oleoyl ethanolamine phosphate/N-(9Z-octadecenoyl)-ethanolamine phosphate, a potential physiological compound. Through dephosphorylation of these bioactive lipid mediators produces new bioactive compounds and may regulate signal transduction in different cellular processes. Indirectly regulates, for instance, cell cycle G1/S phase transition through its phospholipid phosphatase activity. The chain is Phospholipid phosphatase 2 from Rattus norvegicus (Rat).